We begin with the raw amino-acid sequence, 269 residues long: D-aminoacyl-tRNA deacylase (269 aa).

Belongs to the DtdA deacylase family. As to quaternary structure, monomer. Zn(2+) serves as cofactor.

It catalyses the reaction a D-aminoacyl-tRNA + H2O = a tRNA + a D-alpha-amino acid + H(+). The catalysed reaction is glycyl-tRNA(Ala) + H2O = tRNA(Ala) + glycine + H(+). In terms of biological role, D-aminoacyl-tRNA deacylase with broad substrate specificity. By recycling D-aminoacyl-tRNA to D-amino acids and free tRNA molecules, this enzyme counteracts the toxicity associated with the formation of D-aminoacyl-tRNA entities in vivo. The sequence is that of D-aminoacyl-tRNA deacylase from Caldivirga maquilingensis (strain ATCC 700844 / DSM 13496 / JCM 10307 / IC-167).